A 315-amino-acid chain; its full sequence is Tyrosine recombinase XerC (315 aa).

The Core-binding (CB) domain maps to Pro-14–Gln-105. In terms of domain architecture, Tyr recombinase spans Ser-126–Asp-309. Catalysis depends on residues Arg-169, Lys-193, His-261, Arg-264, and His-287. The O-(3'-phospho-DNA)-tyrosine intermediate role is filled by Tyr-296.

Belongs to the 'phage' integrase family. XerC subfamily. Forms a cyclic heterotetrameric complex composed of two molecules of XerC and two molecules of XerD.

The protein localises to the cytoplasm. Its function is as follows. Site-specific tyrosine recombinase, which acts by catalyzing the cutting and rejoining of the recombining DNA molecules. The XerC-XerD complex is essential to convert dimers of the bacterial chromosome into monomers to permit their segregation at cell division. It also contributes to the segregational stability of plasmids. The sequence is that of Tyrosine recombinase XerC from Agrobacterium fabrum (strain C58 / ATCC 33970) (Agrobacterium tumefaciens (strain C58)).